A 216-amino-acid polypeptide reads, in one-letter code: Cyclic AMP receptor protein (216 aa).

6–126 is an a nucleoside 3',5'-cyclic phosphate binding site; that stretch reads LFHGLAPEEV…HNLAALLARR (121 aa). Residues 75–78 and 85–86 each bind 3',5'-cyclic AMP; these read GEMS and RS. One can recognise an HTH crp-type domain in the interval 140–206; that stretch reads EEARNRVAYA…PGTVEVREAA (67 aa). A DNA-binding region (H-T-H motif) is located at residues 166–185; the sequence is HHELAALAGTSRETVSRVLH.

In terms of assembly, homodimer.

Activates transcription. Positively regulates six promoters upstream of the TTHB186, TTHB147, TTHB178, TTHB159, TTHA0771 and TTHA0176 genes in a cAMP-dependent manner. Regulated genes include clustered regularly interspaced short palindromic repeat (CRISPR) associated (Cas) genes, and the genes encoding a putative transcriptional regulator, a protein containing the exonuclease III-like domain of DNA polymerase, a GCN5-related acetyltransferase homolog, and some T.thermophilus-specific proteins of unknown function. The consensus DNA-binding site of this transcriptional regulator is 5'-(CT)NNG(G/T)(G/T)C(A/C)N(A/T)NNTCACAN(G/C)(G/C)-3' in which N is G, A, T or C. This Thermus thermophilus (strain ATCC 27634 / DSM 579 / HB8) protein is Cyclic AMP receptor protein.